Consider the following 239-residue polypeptide: UPF0126 membrane protein VC_2382 (239 aa).

The next 6 membrane-spanning stretches (helical) occupy residues 38-58 (LLYL…VLLA), 62-82 (KMDP…GGTI), 86-106 (ALGA…VIMI), 122-142 (AWWI…GIGV), 153-173 (LIAI…RDVL), and 185-205 (VYAT…AMGY).

It belongs to the UPF0126 family.

The protein localises to the cell membrane. The chain is UPF0126 membrane protein VC_2382 from Vibrio cholerae serotype O1 (strain ATCC 39315 / El Tor Inaba N16961).